Consider the following 1141-residue polypeptide: IgM protease (1141 aa).

The first 32 residues, 1–32, serve as a signal peptide directing secretion; the sequence is MNIQERFSLRKSAVGLVSVSLLCAIYTSTVAA. The Nucleophile role is filled by Cys-195. Disordered stretches follow at residues 518 to 544, 725 to 749, 781 to 805, and 839 to 860; these read PDLP…STNL, EKDS…NVET, LEKD…TNVE, and EKDS…ESTS. Residues 526-544 are compositionally biased toward polar residues; sequence STVSDVDSLSSQETSSTNL. 2 stretches are compositionally biased toward low complexity: residues 738–749 and 795–805; these read EPTSSESTNVET and EPTSSESTNVE. A helical transmembrane segment spans residues 1119-1136; that stretch reads IMGVGLLTLVLGSALGLL.

The protein belongs to the peptidase C66 family.

The protein resides in the cell membrane. It localises to the secreted. Its activity is regulated as follows. IgM cleavage is inhibited by iodoacetamide but not by AEBSF, bestatin, E-64, Z-LVG-CHN(2), or EDTA. Catalyzes the specific cleavage of porcine IgM bound to the bacterial surface. Can degrade only IgM but neither IgG nor IgA, and is host specific, as it exclusively cleaves porcine IgM but not IgM from six other species, including human, mouse and a closely related member of the Suidae family. Promotes survival in porcine blood. Is thus involved in a so-far-unknown mechanism of host-pathogen interaction at an early stage of the host immune response. This is IgM protease (ide) from Streptococcus suis (strain P1/7).